Consider the following 189-residue polypeptide: Pyridoxal 5'-phosphate synthase subunit PdxT (189 aa).

Position 48–50 (Gly48–Ser50) interacts with L-glutamine. Cys80 (nucleophile) is an active-site residue. Residues Arg107 and Ile136–Arg137 contribute to the L-glutamine site. Active-site charge relay system residues include His172 and Glu174.

This sequence belongs to the glutaminase PdxT/SNO family. As to quaternary structure, in the presence of PdxS, forms a dodecamer of heterodimers. Only shows activity in the heterodimer.

It catalyses the reaction aldehydo-D-ribose 5-phosphate + D-glyceraldehyde 3-phosphate + L-glutamine = pyridoxal 5'-phosphate + L-glutamate + phosphate + 3 H2O + H(+). The catalysed reaction is L-glutamine + H2O = L-glutamate + NH4(+). It participates in cofactor biosynthesis; pyridoxal 5'-phosphate biosynthesis. In terms of biological role, catalyzes the hydrolysis of glutamine to glutamate and ammonia as part of the biosynthesis of pyridoxal 5'-phosphate. The resulting ammonia molecule is channeled to the active site of PdxS. The sequence is that of Pyridoxal 5'-phosphate synthase subunit PdxT from Ruminiclostridium cellulolyticum (strain ATCC 35319 / DSM 5812 / JCM 6584 / H10) (Clostridium cellulolyticum).